Consider the following 445-residue polypeptide: 3-dehydroquinate synthase, chloroplastic (445 aa).

The N-terminal 68 residues, 1–68 (MAAFSLSAKQ…RASASSTAPV (68 aa)), are a transit peptide targeting the chloroplast. Residues Asn-122, 153–155 (DGE), Lys-158, 186–191 (GGVIGD), 211–212 (TT), Lys-224, Lys-233, and 251–254 (TLNT) contribute to the NAD(+) site. Glu-266 provides a ligand contact to a divalent metal cation. Lys-308 contacts NAD(+). His-329 and His-346 together coordinate a divalent metal cation.

Belongs to the sugar phosphate cyclases superfamily. Dehydroquinate synthase family. Homodimer. It depends on a divalent metal cation as a cofactor. Requires NAD(+) as cofactor.

It localises to the plastid. Its subcellular location is the chloroplast. It catalyses the reaction 7-phospho-2-dehydro-3-deoxy-D-arabino-heptonate = 3-dehydroquinate + phosphate. It participates in metabolic intermediate biosynthesis; chorismate biosynthesis; chorismate from D-erythrose 4-phosphate and phosphoenolpyruvate: step 2/7. Its function is as follows. Catalyzes the second step in the shikimate pathway. This is 3-dehydroquinate synthase, chloroplastic (DHQS) from Actinidia chinensis var. chinensis (Chinese soft-hair kiwi).